Consider the following 176-residue polypeptide: Calponin-1 (176 aa).

The Calponin-homology (CH) domain occupies 22-125 (PQTERQLRVW…STLIALASQA (104 aa)). A Calponin-like repeat occupies 158–176 (IGLQMGTNKFASQQGMTAY). Thr164 carries the phosphothreonine; by ROCK2 modification. Ser169 carries the phosphoserine; by ROCK2 modification. Thr174 carries the post-translational modification Phosphothreonine; by ROCK2.

This sequence belongs to the calponin family. As to expression, smooth muscle, and tissues containing significant amounts of smooth muscle.

In terms of biological role, thin filament-associated protein that is implicated in the regulation and modulation of smooth muscle contraction. It is capable of binding to actin, calmodulin and tropomyosin. The interaction of calponin with actin inhibits the actomyosin Mg-ATPase activity. The protein is Calponin-1 (CNN1) of Meleagris gallopavo (Wild turkey).